The primary structure comprises 77 residues: MGFGGISIWQLLIILLIVVMLFGTKRLKSLGSDLGDAIKGFRKSMDNGEAEKPAVEEPKGQTIDAQARKVEEPAKKD.

Residues 2–22 traverse the membrane as a helical segment; the sequence is GFGGISIWQLLIILLIVVMLF. 2 stretches are compositionally biased toward basic and acidic residues: residues 46–59 and 66–77; these read DNGE…EEPK and QARKVEEPAKKD. The interval 46–77 is disordered; that stretch reads DNGEAEKPAVEEPKGQTIDAQARKVEEPAKKD.

The protein belongs to the TatA/E family. As to quaternary structure, the Tat system comprises two distinct complexes: a TatABC complex, containing multiple copies of TatA, TatB and TatC subunits, and a separate TatA complex, containing only TatA subunits. Substrates initially bind to the TatABC complex, which probably triggers association of the separate TatA complex to form the active translocon.

Its subcellular location is the cell inner membrane. Functionally, part of the twin-arginine translocation (Tat) system that transports large folded proteins containing a characteristic twin-arginine motif in their signal peptide across membranes. TatA could form the protein-conducting channel of the Tat system. In Ectopseudomonas mendocina (strain ymp) (Pseudomonas mendocina), this protein is Sec-independent protein translocase protein TatA.